The sequence spans 42 residues: Bacteriocin bavaricin-MN (42 aa).

The cysteines at positions 10 and 15 are disulfide-linked.

This sequence belongs to the bacteriocin class IIA/YGNGV family.

It localises to the secreted. In terms of biological role, has antimicrobial activity. This is Bacteriocin bavaricin-MN from Latilactobacillus sakei (Lactobacillus sakei).